Reading from the N-terminus, the 298-residue chain is Enoyl-CoA hydratase ACTT6 (298 aa).

This sequence belongs to the enoyl-CoA hydratase/isomerase family.

It participates in mycotoxin biosynthesis. Enoyl-CoA hydratase; part of the gene clusters that mediate the biosynthesis of the host-selective toxins (HSTs) ACT-toxins responsible for brown spot of tangerine disease by the tangerine pathotype which affects tangerines and mandarins. ACT-toxins consist of three moieties, 9,10-epoxy-8-hydroxy-9-methyl-decatrienoic acid (EDA), valine and a polyketide. ACT-toxin I is toxic to both citrus and pear; toxin II the 5''-deoxy derivative of ACT-toxin I, is highly toxic to pear and slightly toxic to citrus. On cellular level, ACT-toxins affect plasma membrane of susceptible cells and cause a sudden increase in loss of K(+) after a few minutes of toxin treatment. The acyl-CoA ligase ACTT1, the hydrolase ACTT2, the enoyl-CoA hydratases ACTT3 and ACTT6, and the acyl-CoA synthetase ACTT5 are all involved in the biosynthesis of the AK-, AF- and ACT-toxin common 9,10-epoxy-8-hydroxy-9-methyl-decatrienoic acid (EDA) structural moiety. The exact role of each enzyme, and of additional enzymes identified within the AF-toxin clusters have still to be determined. On the other hand, ACTTS1 to ACTTS4 are specific to the tangerine pathotype. The function of ACTTS3 is to elongate the polyketide chain portion of ACT-toxin that is unique to this toxin. The enoyl-reductase ACTTS2 might complement the missing enoyl-reductase (ER) domain in ACTTS3 in the synthesis of the polyketide portion of ACT-toxin. The roles of the nonribosomal peptide synthetases-related proteins ACTTS1 and ACTTS4 have also still not been elucidated. This Alternaria alternata (Alternaria rot fungus) protein is Enoyl-CoA hydratase ACTT6.